The following is a 599-amino-acid chain: rRNA (cytosine-C(5))-methyltransferase NOP2C (599 aa).

One can recognise a PUA domain in the interval 158 to 265 (PKEVLVSRKC…IAVDLNHRVF (108 aa)). S-adenosyl-L-methionine-binding positions include 304-310 (CAAPGGK), Asp328, and Asp355. Residues 372–454 (LINGDNSSSM…GGRAGKSQGF (83 aa)) are disordered. A compositionally biased stretch (low complexity) spans 378–388 (SSSMTSHSELS). A compositionally biased stretch (basic and acidic residues) spans 399–412 (RRSEADKSCEKNDS). Residues 413–424 (TEQPNGGDNVSQ) show a composition bias toward polar residues. Positions 428–438 (RKNKGRLKNGR) are enriched in basic residues. Asp465 contacts S-adenosyl-L-methionine. Residue Cys516 is the Nucleophile of the active site.

Belongs to the class I-like SAM-binding methyltransferase superfamily. RsmB/NOP family.

The protein resides in the nucleus. It is found in the nucleolus. It catalyses the reaction a cytidine in rRNA + S-adenosyl-L-methionine = a 5-methylcytidine in rRNA + S-adenosyl-L-homocysteine + H(+). In terms of biological role, involved in ribosomal large subunit assembly. S-adenosyl-L-methionine-dependent methyltransferase that may methylates the C(5) position of cytosine in rRNA. May play a role in the regulation of the cell cycle and the increased nucleolar activity that is associated with the cell proliferation. Seems involved in the regulation of cell proliferation. This is rRNA (cytosine-C(5))-methyltransferase NOP2C from Arabidopsis thaliana (Mouse-ear cress).